The primary structure comprises 24 residues: Brevinin-1PTa (24 aa).

A disulfide bridge links C18 with C24.

In terms of tissue distribution, expressed by the skin glands.

Its subcellular location is the secreted. Functionally, has antibacterial activity against the Gram-positive bacterium S.aureus ATCC 25923 (MIC=3 uM) and the Gram-negative bacterium E.coli ATCC 25726 (MIC=24 uM). The sequence is that of Brevinin-1PTa from Pulchrana picturata (Malaysian fire frog).